A 413-amino-acid chain; its full sequence is Aspartate aminotransferase, cytoplasmic (413 aa).

L-aspartate is bound by residues glycine 39, tryptophan 141, and asparagine 195. Lysine 259 is subject to N6-(pyridoxal phosphate)lysine. Arginine 387 contacts L-aspartate.

It belongs to the class-I pyridoxal-phosphate-dependent aminotransferase family. As to quaternary structure, homodimer. Pyridoxal 5'-phosphate is required as a cofactor.

It is found in the cytoplasm. It catalyses the reaction L-aspartate + 2-oxoglutarate = oxaloacetate + L-glutamate. It carries out the reaction L-cysteine + 2-oxoglutarate = 2-oxo-3-sulfanylpropanoate + L-glutamate. The enzyme catalyses (2S)-2-aminobutanoate + 2-oxoglutarate = 2-oxobutanoate + L-glutamate. The catalysed reaction is 3-sulfino-L-alanine + 2-oxoglutarate = 3-sulfinopyruvate + L-glutamate. Its function is as follows. Biosynthesis of L-glutamate from L-aspartate or L-cysteine. Important regulator of levels of glutamate, the major excitatory neurotransmitter of the vertebrate central nervous system. Acts as a scavenger of glutamate in brain neuroprotection. The aspartate aminotransferase activity is involved in hepatic glucose synthesis during development and in adipocyte glyceroneogenesis. Using L-cysteine as substrate, regulates levels of mercaptopyruvate, an important source of hydrogen sulfide. Mercaptopyruvate is converted into H(2)S via the action of 3-mercaptopyruvate sulfurtransferase (3MST). Hydrogen sulfide is an important synaptic modulator and neuroprotectant in the brain. This chain is Aspartate aminotransferase, cytoplasmic, found in Bos taurus (Bovine).